A 295-amino-acid polypeptide reads, in one-letter code: Phosphoenolpyruvate phosphomutase (295 aa).

The active-site Nucleophile is Asp-58. Position 58 (Asp-58) interacts with Mg(2+).

This sequence belongs to the isocitrate lyase/PEP mutase superfamily. PEP mutase family. As to quaternary structure, homotetramer. The cofactor is Mg(2+).

It catalyses the reaction phosphoenolpyruvate + H(+) = 3-phosphonopyruvate. It functions in the pathway phosphorus metabolism; phosphonate biosynthesis. In terms of biological role, formation of a carbon-phosphorus bond by converting phosphoenolpyruvate (PEP) to phosphonopyruvate (P-Pyr). The polypeptide is Phosphoenolpyruvate phosphomutase (Mytilus edulis (Blue mussel)).